Consider the following 319-residue polypeptide: Large ribosomal subunit protein uL10 (319 aa).

A disordered region spans residues 289-319 (EQKSAAPAAKEEAPKEDSEESDEDMGFGLFD).

Belongs to the universal ribosomal protein uL10 family. As to quaternary structure, P0 forms a pentameric complex by interaction with dimers of P1 and P2. In terms of processing, phosphorylated.

The protein resides in the nucleus. It localises to the cytoplasm. Its function is as follows. Ribosomal protein P0 is the functional equivalent of E.coli protein L10. This Danio rerio (Zebrafish) protein is Large ribosomal subunit protein uL10 (rplp0).